Here is a 318-residue protein sequence, read N- to C-terminus: MGFEWGFKPSSKITQSTVSSQGTGNVMIPTAGVKQKRRYANEEQEEEELPRNKNVMKYGGVSKRRPQPGSLIRGQPLPLQRGMELMNKNQLQQLLVDLMTKHPEIQQSVHTRVIGLDFSIQKCLDMLKQKSEAVYQSIPYNRSYESNKLDDYAFVRMKPQILEFLNCLVDFILDNIPPRLENLHASLKFLDICTELVIKLPRFELASNNYYYDKCIEQLSHVWCTLIEHXARDRIILLADNSSVWKSHMTRLQVYNEHSNGLLERPLQLFKSLDMGSPSAASSSTLSLQESIIYHHDTMTANENNNNSGSAATDSPFN.

The disordered stretch occupies residues 1 to 75 (MGFEWGFKPS…PQPGSLIRGQ (75 aa)). A compositionally biased stretch (polar residues) spans 11-24 (SKITQSTVSSQGTG).

Belongs to the cut8/STS1 family. Binds the proteasome. Interacts with karyopherin SRP1 and Proteasome subunit RPN11.

The protein resides in the cytoplasm. It is found in the nucleus. Its function is as follows. Involved in ubiquitin-mediated protein degradation. Regulatory factor in the ubiquitin/proteasome pathway that controls the turnover of proteasome substrates. Targets proteasomes to the nucleus and facilitates the degradation of nuclear proteins. This is Tethering factor for nuclear proteasome STS1 (STS1) from Saccharomyces cerevisiae (strain Lalvin QA23) (Baker's yeast).